A 218-amino-acid polypeptide reads, in one-letter code: MYQILIGCVWQKSPYINQCTEFQPPLSFVTPERMRRFMRCWARLELVYMLAWIVTTKLVKATRLDFTWGPGEPKRILEASCGSGPIMKGQLFTSPNIKNLLNRTTGIMVKAHCNPPEAILWVDTPPKPVWVNPFAVVQGLAEDVTNGNMPQDFKEKLLFALDDSLSQSQSSPDEILGPPPLGCFTGPFFLSPPKSKDIAEGLKDSCIPASYYANLQKT.

An interaction with gH region spans residues 57–185 (KLVKATRLDF…LGPPPLGCFT (129 aa)). A gL alphaherpesvirus-type domain is found at 60–218 (KATRLDFTWG…ASYYANLQKT (159 aa)). Intrachain disulfides connect C81–C113 and C183–C206.

It belongs to the herpesviridae glycoprotein L (gL) family. Alphaherpesvirinae gL subfamily. Interacts with glycoprotein H (gH); this interaction is necessary for the correct processing and cell surface expression of gH. The heterodimer gH/gL seems to interact with gB trimers during fusion.

The protein localises to the virion membrane. The protein resides in the host cell membrane. It is found in the host Golgi apparatus. It localises to the host trans-Golgi network. The heterodimer glycoprotein H-glycoprotein L is required for the fusion of viral and plasma membranes leading to virus entry into the host cell. Acts as a functional inhibitor of gH and maintains gH in an inhibited form. Upon binding to host integrins, gL dissociates from gH leading to activation of the viral fusion glycoproteins gB and gH. This is Envelope glycoprotein L from Equus caballus (Horse).